We begin with the raw amino-acid sequence, 159 residues long: MINYLKSFFLYEIIRGLALTLKYFFKAKVTINYPYEKSPVSPRFKGEHALRRYENGEERCIACKLCEAICPAQAIVIEADEREDGSRRTTRYDIDMTKCIYCGLCQEACPVDAIVEGPNFEFASLTHTALIYDKEKLLQNGDRWEQALANKLHKDYEYR.

2 4Fe-4S ferredoxin-type domains span residues 51–80 (RRYE…IEAD) and 90–119 (TRYD…EGPN). Cys60, Cys63, Cys66, Cys70, Cys99, Cys102, Cys105, and Cys109 together coordinate [4Fe-4S] cluster.

It belongs to the complex I 23 kDa subunit family. NDH-1 is composed of 14 different subunits. Subunits NuoA, H, J, K, L, M, N constitute the membrane sector of the complex. Requires [4Fe-4S] cluster as cofactor.

Its subcellular location is the cell inner membrane. The catalysed reaction is a quinone + NADH + 5 H(+)(in) = a quinol + NAD(+) + 4 H(+)(out). In terms of biological role, NDH-1 shuttles electrons from NADH, via FMN and iron-sulfur (Fe-S) centers, to quinones in the respiratory chain. The immediate electron acceptor for the enzyme in this species is believed to be ubiquinone. Couples the redox reaction to proton translocation (for every two electrons transferred, four hydrogen ions are translocated across the cytoplasmic membrane), and thus conserves the redox energy in a proton gradient. The sequence is that of NADH-quinone oxidoreductase subunit I from Rickettsia bellii (strain OSU 85-389).